The primary structure comprises 169 residues: Peptide methionine sulfoxide reductase MsrA (169 aa).

The active site involves cysteine 10.

Belongs to the MsrA Met sulfoxide reductase family.

It catalyses the reaction L-methionyl-[protein] + [thioredoxin]-disulfide + H2O = L-methionyl-(S)-S-oxide-[protein] + [thioredoxin]-dithiol. It carries out the reaction [thioredoxin]-disulfide + L-methionine + H2O = L-methionine (S)-S-oxide + [thioredoxin]-dithiol. Its function is as follows. Has an important function as a repair enzyme for proteins that have been inactivated by oxidation. Catalyzes the reversible oxidation-reduction of methionine sulfoxide in proteins to methionine. In Streptococcus pyogenes serotype M12 (strain MGAS2096), this protein is Peptide methionine sulfoxide reductase MsrA.